We begin with the raw amino-acid sequence, 1559 residues long: Bile pigment transporter 1 (1559 aa).

Topologically, residues 1 to 29 (MSSLEVVDGCPYGYRPYPDSGTNALNPCF) are vacuolar. The chain crosses the membrane as a helical span at residues 30 to 50 (ISVISAWQAVFFLLIGSYQLW). Topologically, residues 51 to 84 (KLYKNNKVPPRFKNFPTLPSKINSRHLTHLTNVC) are cytoplasmic. Residues 85-105 (FQSTLIICELALVSQSSDRVY) form a helical membrane-spanning segment. The Vacuolar portion of the chain corresponds to 106–110 (PFILK). Residues 111–127 (KALYLNLLFNLGISLPT) traverse the membrane as a helical segment. Topologically, residues 128–139 (QYLAYFKSTFSM) are cytoplasmic. The helical transmembrane segment at 140–160 (GNQLFYYMFQILLQLFLILQR) threads the bilayer. The Vacuolar portion of the chain corresponds to 161–178 (YYHGSSNERLTVISGQTA). The chain crosses the membrane as a helical span at residues 179–199 (MILEVLLLFNSVAIFIYDLCI). At 200 to 283 (FEPINELSEY…WLNRNSLWRA (84 aa)) the chain is on the cytoplasmic side. A helical transmembrane segment spans residues 284 to 304 (IWKSFGRTISVAMLYETTSDL). The ABC transmembrane type-1 1 domain occupies 292 to 578 (ISVAMLYETT…VPSMINTIIE (287 aa)). Residues 305–333 (LSVVQPQFLRIFIDGLNPETSSKYPPLNG) lie on the Vacuolar side of the membrane. A helical transmembrane segment spans residues 334-354 (VFIALTLFVISVVSVFLTNQF). Topologically, residues 355 to 410 (YIGIFEAGLGIRGSLASLVYQKSLRLTLAERNEKSTGDILNLMSVDVLRIQRFFEN) are cytoplasmic. A helical transmembrane segment spans residues 411-431 (AQTIIGAPIQIIVVLTSLYWL). Over 432 to 434 (LGK) the chain is Vacuolar. A helical transmembrane segment spans residues 435 to 455 (AVIGGLVTMAIMMPINAFLSR). Residues 456 to 518 (KVKKLSKTQM…NFRKIGIVSN (63 aa)) are Cytoplasmic-facing. Residues 519–539 (LIYFAWNCVPLMVTCSTFGLF) traverse the membrane as a helical segment. At 540-560 (SLFSDSPLSPAIVFPSLSLFN) the chain is on the vacuolar side. Residues 561–581 (ILNSAIYSVPSMINTIIETSV) form a helical membrane-spanning segment. Residues 582 to 972 (SMERLKSFLL…VKTKIYLAYI (391 aa)) lie on the Cytoplasmic side of the membrane. The 233-residue stretch at 639–871 (LRTDEESIIG…KNNTSKLKKL (233 aa)) folds into the ABC transporter 1 domain. The residue at position 645 (Ser-645) is a Phosphoserine. Residue 672 to 679 (GRVGAGKS) participates in ATP binding. The segment at 877–899 (SPIDNGNESDVQTEHRSESEVDE) is disordered. At Ser-885 the chain carries Phosphoserine. Thr-889 bears the Phosphothreonine mark. 2 positions are modified to phosphoserine: Ser-893 and Ser-895. Thr-916 is subject to Phosphothreonine. Phosphoserine is present on residues Ser-927 and Ser-931. Thr-934 is modified (phosphothreonine). Residues 973 to 993 (KACGVLGVVLFFLFMILTRVF) form a helical membrane-spanning segment. The 286-residue stretch at 980–1265 (VVLFFLFMIL…IVRTTVTIET (286 aa)) folds into the ABC transmembrane type-1 2 domain. Topologically, residues 994 to 1030 (DLAENFWLKYWSESNEKNGSNERVWMFVGVYSLIGVA) are vacuolar. Residue Asn-1011 is glycosylated (N-linked (GlcNAc...) asparagine). The chain crosses the membrane as a helical span at residues 1031 to 1052 (SAAFNNLRSIMMLLYCSIRGSK). Over 1053–1095 (KLHESMAKSVIRSPMTFFETTPVGRIINRFSSDMDAVDSNLQY) the chain is Cytoplasmic. A helical transmembrane segment spans residues 1096 to 1116 (IFSFFFKSILTYLVTVILVGY). Position 1117 (Asn-1117) is a topological domain, vacuolar. A helical transmembrane segment spans residues 1118–1138 (MPWFLVFNMFLVVIYIYYQTF). At 1139 to 1209 (YIVLSRELKR…STNRWLSVRL (71 aa)) the chain is on the cytoplasmic side. Residues 1210–1230 (QTIGATIVLATAILALATMNT) form a helical membrane-spanning segment. Residues 1231–1235 (KRQLS) lie on the Vacuolar side of the membrane. Residues 1236–1256 (SGMVGLLMSYSLEVTGSLTWI) traverse the membrane as a helical segment. At 1257–1559 (VRTTVTIETN…SLCEKGGYLK (303 aa)) the chain is on the cytoplasmic side. In terms of domain architecture, ABC transporter 2 spans 1302–1553 (IEFKNYSTKY…KTSIFYSLCE (252 aa)). ATP is bound at residue 1336 to 1343 (GRTGAGKS). Residues 1420-1433 (HLEKMLHSKPRGDD) show a composition bias toward basic and acidic residues. The tract at residues 1420–1439 (HLEKMLHSKPRGDDSNEEDG) is disordered.

Belongs to the ABC transporter superfamily.

Its subcellular location is the vacuole membrane. In terms of biological role, cooperates for the ATP-dependent vacuolar transport of bilirubin and glutathione conjugates. This Saccharomyces cerevisiae (strain ATCC 204508 / S288c) (Baker's yeast) protein is Bile pigment transporter 1 (BPT1).